Consider the following 184-residue polypeptide: Zinc metalloproteinase-disintegrin-like ammodytagin (184 aa).

The Peptidase M12B domain maps to 1 to 90 (KSAAXVTLDL…CPAKCIDNKP (90 aa)). Asp-20 is a Ca(2+) binding site. His-64 contributes to the Zn(2+) binding site. Glu-65 is an active-site residue. Zn(2+) is bound by residues His-68 and His-74. The Ca(2+) site is built by Asn-88, Val-100, Asn-103, Phe-105, and Glu-107. The region spanning 98–124 (PAVCGNYFVELTPGSQCADGVCCDQCR) is the Disintegrin domain. Intrachain disulfides connect Cys-114-Cys-120 and Cys-165-Cys-177.

It belongs to the venom metalloproteinase (M12B) family. P-III subfamily. P-IIIc sub-subfamily. As to quaternary structure, heterodimer; disulfide-linked. Zn(2+) serves as cofactor. The N-terminus is blocked. Post-translationally, N-glycosylated. As to expression, expressed by the venom gland.

Its subcellular location is the secreted. Inhibited by EDTA, DTT and zinc ions. Partially inhibited by L-cysteine. Not inhibited by 2-propanol or PMSF. Activity is enhanced by calcium or magnesium ions. Snake venom zinc metalloprotease that has fibrinogenolytic and hemorrhagic activities in mouse and rats. Hydrolyzes the Aalpha-chain (FGA) and more slowly the Bbeta-chain of fibrinogen (FGB), without affecting the gamma-chain. Its hemorrhagic activity results of its involvement in cleavage of basal membrane components (nidogen and fibronectin but not laminin) and depletion of fibrinogen, prothrombin (F2) and factor X (F10) in blood circulation. Also possess potent azocaseinolytic activity and cleaves insulin B-chain, hydrolyzing it at positions Gln(4)-His(5), His(10)-Leu(11) and Tyr(16)-Leu(17). This Vipera ammodytes ammodytes (Western sand viper) protein is Zinc metalloproteinase-disintegrin-like ammodytagin.